The chain runs to 191 residues: Putative 3-methyladenine DNA glycosylase (191 aa).

This sequence belongs to the DNA glycosylase MPG family.

The sequence is that of Putative 3-methyladenine DNA glycosylase from Cutibacterium acnes (strain DSM 16379 / KPA171202) (Propionibacterium acnes).